The primary structure comprises 486 residues: Coronin-1B (486 aa).

Ser-2 carries the post-translational modification Phosphoserine; by PKC. 5 WD repeats span residues 80 to 120 (GHTG…LTSP), 130 to 170 (GHTK…ELYR), 174 to 213 (LHPD…LVAE), 217 to 260 (AHEG…EPMA), and 265 to 305 (DSSN…PYIH). The disordered stretch occupies residues 404–444 (LKVSRRNVLSDSRPTSAARPAAPAPAAPAPAAAASSSLSGA). Residues 432 to 444 (APAAAASSSLSGA) show a composition bias toward low complexity. Positions 446–484 (EAGKLEEVMRELRALRALVKEQGERIGRLEEQLGRVENG) form a coiled coil.

This sequence belongs to the WD repeat coronin family. As to quaternary structure, forms homooligomers, but does not form complexes with the other coronins. Interacts with Arp2/3 complex components, including ACTR2, ARPC1B and ARPC2. Binds actin. In terms of processing, phosphorylated in vivo by PKC in response to cholinergic stimulation. Phosphorylation on Ser-2 regulates the interaction with the Arp2/3 complex and cell motility in fibroblasts. Phosphorylation does not seem to affect subcellular location.

The protein resides in the cytoplasm. It is found in the cytoskeleton. The protein localises to the stress fiber. Its function is as follows. Regulates leading edge dynamics and cell motility in fibroblasts. May be involved in cytokinesis and signal transduction. The polypeptide is Coronin-1B (CORO1B) (Oryctolagus cuniculus (Rabbit)).